Reading from the N-terminus, the 177-residue chain is Inorganic pyrophosphatase (177 aa).

Lysine 31, arginine 45, and tyrosine 57 together coordinate substrate. Mg(2+) is bound by residues aspartate 67, aspartate 72, and aspartate 104. Substrate is bound at residue tyrosine 142.

The protein belongs to the PPase family. As to quaternary structure, homohexamer. Mg(2+) serves as cofactor.

Its subcellular location is the cytoplasm. It catalyses the reaction diphosphate + H2O = 2 phosphate + H(+). Its function is as follows. Catalyzes the hydrolysis of inorganic pyrophosphate (PPi) forming two phosphate ions. The sequence is that of Inorganic pyrophosphatase from Neisseria meningitidis serogroup B (strain ATCC BAA-335 / MC58).